Reading from the N-terminus, the 235-residue chain is MDVYEGKAKKIIPLDDGKVIMEFKDDATAFNGEKKAQFRGKGWLNAQISAHLFRVLEASGIKTHFIGVAGDNRLIVERLKMYPLEVVVRNVVAGSLKKRLPLEEGTELPEPIIEFYYKNDDLGDPMINQYHARVLGVGESELKEMEKIALQVNDVLRKYFAERGIILVDFKLEFGKNTRGEIVLGDEISPDTCRFWDAETKESLDKDVFRFGKGDLISAYERLYERITGEAPVRR.

This sequence belongs to the SAICAR synthetase family.

It catalyses the reaction 5-amino-1-(5-phospho-D-ribosyl)imidazole-4-carboxylate + L-aspartate + ATP = (2S)-2-[5-amino-1-(5-phospho-beta-D-ribosyl)imidazole-4-carboxamido]succinate + ADP + phosphate + 2 H(+). It functions in the pathway purine metabolism; IMP biosynthesis via de novo pathway; 5-amino-1-(5-phospho-D-ribosyl)imidazole-4-carboxamide from 5-amino-1-(5-phospho-D-ribosyl)imidazole-4-carboxylate: step 1/2. The sequence is that of Phosphoribosylaminoimidazole-succinocarboxamide synthase from Thermococcus kodakarensis (strain ATCC BAA-918 / JCM 12380 / KOD1) (Pyrococcus kodakaraensis (strain KOD1)).